The sequence spans 4116 residues: MGATGRLELTLAAPPHPGPAFQRSKARETQGEEEGSEMQIAKSDSIHHMSHSQGQPELPPLPASANEEPSGLYQTVMSHSFYPPLMQRTSWTLAAPFKEQHHHRGPSDSIANNYSLMAQDLKLKDLLKVYQPATISVPRDRTGQGLPSSGNRSSSEPMRKKTKFSSRNKEDSTRIKLAFKTSIFSPMKKEVKTSLTFPGSRPMSPEQQLDVMLQQEMEMESKEKKPSESDLERYYYYLTNGIRKDMIAPEEGEVMVRISKLISNTLLTSPFLEPLMVVLVQEKENDYYCSLMKSIVDYILMDPMERKRLFIESIPRLFPQRVIRAPVPWHSVYRSAKKWNEEHLHTVNPMMLRLKELWFAEFRDLRFVRTAEILAGKLPLQPQEFWDVIQKHCLEAHQTLLNKWIPTCAQLFTSRKEHWIHFAPKSNYDSSRNIEEYFASVASFMSLQLRELVIKSLEDLVSLFMIHKDGNDFKEPYQEMKFFIPQLIMIKLEVSEPIIVFNPSFDGCWELIRDSFLEIIKNSNGIPKLKYIPLKFSFTAAAADRQCVKAAEPGEPSMHAAATAMAELKGYNLLLGTVNAEEKLVSDFLIQTFKVFQKNQVGPCKYLNVYKKYVDLLDNTAEQNIAAFLKENHDIDDFVTKINAIKKRRNEIASMNITVPLAMFCLDATALNHDLCERAQNLKDHLIQFQVDVNRDTNTSICNQYSHIADKVSEVPANTKELVSLIEFLKKSSAVTVFKLRRQLRDASERLEFLMDYADLPYQIEDIFDNSRNLLLHKRDQAEMDLIKRCSEFELRLEGYHRELESFRKREVMTTEEMKHNVEKLNELSKNLNRAFAEFELINKEEELLEKEKSTYPLLQAMLKNKVPYEQLWSTAYEFSIKSEEWMNGPLFLLNAEQIAEEIGNMWRTTYKLIKTLSDVPAPRRLAENVKIKIDKFKQYIPILSISCNPGMKDRHWQQISEIVGYEIKPTETTCLSNMLEFGFGKFVEKLEPIGAAASKEYSLEKNLDRMKLDWVNVTFSFVKYRDTDTNILCAIDDIQMLLDDHVIKTQTMCGSPFIKPIEAECRKWEEKLIRIQDNLDAWLKCQATWLYLEPIFSSEDIIAQMPEEGRKFGIVDSYWKSLMSQAVKDNRILVAADQPRMAEKLQEANFLLEDIQKGLNDYLEKKRLFFPRFFFLSNDELLEILSETKDPLRVQPHLKKCFEGIAKLEFTDNLEIVGMISSEKETVPFIQKIYPANAKGMVEKWLQQVEQMMLASMREVIGLGIEAYVKVPRNHWVLQWPGQVVICVSSIFWTQEVSQALAENTLLDFLKKSNDQIAQIVQLVRGKLSSGARLTLGALTVIDVHARDVVAKLSEDRVSDLNDFQWISQLRYYWVAKDVQVQIITTEALYGYEYLGNSPRLVITPLTDRCYRTLMGALKLNLGGAPEGPAGTGKTETTKDLAKALAKQCVVFNCSDGLDYKAMGKFFKGLAQAGAWACFDEFNRIEVEVLSVVAQQILSIQQAIIRKLKTFIFEGTELSLNPTCAVFITMNPGYAGRAELPDNLKALFRTVAMMVPDYALIGEISLYSMGFLDSRSLAQKIVATYRLCSEQLSSQHHYDYGMRAVKSVLTAAGNLKLKYPEENESVLLLRALLDVNLAKFLAQDVPLFQGIISDLFPGVVLPKPDYEVFLKVLNDNIKKMKLQPVPWFIGKIIQIYEMMLVRHGYMIVGDPMGGKTSAYKVLAAALGDLHAANQMEEFAVEYKIINPKAITMGQLYGCFDQVSHEWMDGVLANAFREQASSLSDDRKWIIFDGPVDAIWIENMNTVLDDNKKLCLMSGEIIQMNSKMSLIFEPADLEQASPATVSRCGMIYMEPHQLGWKPLKDSYMDTLPSSLTKEHKELVNDMFMWLVQPCLEFGRLHCKFVVQTSPIHLAFSMMRLYSSLLDEIRAVEEEEMELGEGLSSQQIFLWLQGLFLFSLVWTVAGTINADSRKKFDVFFRNLIMGMDDNHPRPKSVKLTKNNIFPERGSIYDFYFIKQASGHWETWTQYITKEEEKVPAGAKVSELIIPTMETARQSFFLKTYLDHEIPMLFVGPTGTGKSAITNNFLLHLPKNTYLPNCINFSARTSANQTQDIIMSKLDRRRKGLFGPPIGKKAVVFVDDLNMPAKEVYGAQPPIELLRQWIDHGYWFDKKDTTRLDIVDMLLVTAMGPPGGGRNDITGRFTRHLNIISINAFEDDILTKIFSSIVDWHFGKGFDVMFLRYGKMLVQATKTIYRDAVENFLPTPSKSHYVFNLRDFSRVIQGVLLCPHTHLQDVEKCIRLWIHEVYRVFYDRLIDKEDRQVFFNMVKETTSNCFKQTIEKVLIHLSPTGKIVDDNIRSLFFGDYFKPESDQKIYDEITDLKQLTVVMEHYLEEFNNISKAPMSLVMFRFAIEHISRICRVLKQDKGHLLLVGIGGSGRQSAAKLSTFMNAYELYQIEITKNYAGNDWREDLKKIILQVGVATKSTVFLFADNQIKDESFVEDINMLLNTGDVPNIFPADEKADIVEKMQTAARTQGEKVEVTPLSMYNFFIERVINKISFSLAMSPIGDAFRNRLRMFPSLINCCTIDWFQSWPTDALELVANKFLEDVELDDNIRVEVVSMCKYFQESVKKLSLDYYNKLRRHNYVTPTSYLELILTFKTLLNSKRQEVAMMRNRYLTGLQKLDFAASQVAVMQRELTALQPQLILTSEETAKMMVKIEAETREADGKKLLVQADEKEANVAAAIAQGIKNECEGDLAEAMPALEAALAALDTLNPADISLVKSMQNPPGPVKLVMESICIMKGMKPERKPDPSGSGKMIEDYWGVSKKILGDLKFLESLKTYDKDNIPPLTMKRIRERFINHPEFQPAVIKNVSSACEGLCKWVRAMEVYDRVAKVVAPKRERLREAEGKLAAQMQKLNQKRAELKLVVDRLQALNDDFEEMNTKKKDLEENIEICSQKLVRAEKLISGLGGEKDRWTEAARQLGIRYTNLTGDVLLSSGTVAYLGAFTVDYRVQCQNQWLAECKDKVIPGFSDFSLSHTLGDPIKIRAWQIAGLPVDSFSIDNGIIVSNSRRWALMIDPHGQANKWIKNMEKANKLAVIKFSDSNYMRMLENALQLGTPVLIENIGEELDASIEPILLKATFKQQGVEYMRLGENIIEYSRDFKLYITTRLRNPHYLPEVAVKVCLLNFMITPLGLQDQLLGIVAAKEKPELEEKKNQLIVESAKNKKHLKEIEDKILEVLSMSKGNILEDETAIKVLSSSKVLSEEISEKQKVASMTETQIDETRMGYKPVAVHSATIFFCISDLANIEPMYQYSLTWFINLYMHSLTHSTKSEELNLRIKYIIDHFTLSIYNNVCRSLFEKDKLLFSLLLTIGIMKQKKEITEEVWYFLLTGGIALDNPYPNPAPQWLSEKAWAEIVRASALPKLHGLMEHLEQNLGEWKLIYDSAWPHEEQLPGSWKFSQGLEKMVILRCLRPDKMVPAVREFIAEHMGKLYIEAPTFDLQGSYNDSSCCAPLIFVLSPSADPMAGLLKFADDLGMGGTRTQTISLGQGQGPIAAKMINNAIKDGTWVVLQNCHLAASWMPTLEKICEEVIVPESTNARFRLWLTSYPSEKFPVSILQNGIKMTNEPPKGLRANLLRSYLNDPISDPVFFQSCAKAVMWQKMLFGLCFFHAVVQERRNFGPLGWNIPYEFNESDLRISMWQIQMFLNDYKEVPFDALTYLTGECNYGGRVTDDKDRRLLLSLLSMFYCKEIEEDYYSLAPGDTYYIPPHGSYQSYIDYLRNLPITAHPEVFGLHENADITKDNQETNQLFEGVLLTLPRQSGGSGKSPQEVVEELAQDILSKLPRDFDLEEVMKLYPVVYEESMNTVLRQELIRFNRLTKVVRRSLINLGRAIKGQVLMSSELEEVFNSMLVGKVPAMWAAKSYPSLKPLGGYVADLLARLTFFQEWIDKGPPVVFWISGFYFTQSFLTGVSQNYARKYTIPIDHIGFEFEVTPQETVMENNPEDGAYIKGLFLEGARWDRKTMQIGESLPKILYDPLPIIWLKPGESAMFLHQDIYVCPVYKTSARRGTLSTTGHSTNYVLSIELPTDMPQKHWINRGVASLCQLDN.

Disordered regions lie at residues 1 to 68 (MGAT…ANEE) and 137 to 172 (VPRD…KEDS). The segment at 1-1390 (MGATGRLELT…QVQIITTEAL (1390 aa)) is stem. The span at 145-156 (GLPSSGNRSSSE) shows a compositional bias: polar residues. Positions 785–852 (DLIKRCSEFE…NKEEELLEKE (68 aa)) form a coiled coil. AAA stretches follow at residues 1391–1612 (YGYE…VLTA), 1672–1903 (KVLN…LHCK), 2036–2284 (KVPA…VIQG), and 2395–2646 (EFNN…LRRH). ATP-binding positions include 1429 to 1436 (GPAGTGKT), 1710 to 1717 (GDPMGGKT), 2074 to 2081 (GPTGTGKS), and 2434 to 2441 (GIGGSGRQ). The segment at 2661–2960 (FKTLLNSKRQ…KDLEENIEIC (300 aa)) is stalk. AAA regions lie at residues 3045-3275 (LGDP…EISE) and 3488-3712 (VREF…QIQM).

Belongs to the dynein heavy chain family. In terms of assembly, consists of at least two heavy chains and a number of intermediate and light chains. As to expression, expressed primarily in trachea and testis, 2 tissues containing axonemal structures. Also expressed in lung.

Its subcellular location is the cytoplasm. The protein localises to the cytoskeleton. It is found in the cilium axoneme. In terms of biological role, force generating protein of respiratory cilia. Produces force towards the minus ends of microtubules. Dynein has ATPase activity; the force-producing power stroke is thought to occur on release of ADP. Involved in sperm motility; implicated in sperm flagellar assembly. The chain is Dynein axonemal heavy chain 3 (DNAH3) from Homo sapiens (Human).